We begin with the raw amino-acid sequence, 450 residues long: Probable glucan endo-1,3-beta-glucosidase eglC (450 aa).

Residues 1-18 (MQFTHLVALALALATSEA) form the signal peptide. Catalysis depends on Glu128, which acts as the Proton donor. An N-linked (GlcNAc...) asparagine glycan is attached at Asn183. Glu239 acts as the Nucleophile in catalysis. N-linked (GlcNAc...) asparagine glycans are attached at residues Asn362 and Asn368. Low complexity-rich tracts occupy residues 377-395 (SSAI…SGSS) and 405-420 (ASGQ…SAPS). The disordered stretch occupies residues 377–420 (SSAISGSSSGSAAGSSGSSGSSGSGASGASGQSSSSTGSSSAPS). The GPI-anchor amidated asparagine moiety is linked to residue Asn427. Residues 428 to 450 (AASGLSGSICGAVVAVCLALAAL) constitute a propeptide, removed in mature form.

Belongs to the glycosyl hydrolase 17 family. The GPI-anchor is attached to the protein in the endoplasmic reticulum and serves to target the protein to the cell surface. There, the glucosamine-inositol phospholipid moiety is cleaved off and the GPI-modified mannoprotein is covalently attached via its lipidless GPI glycan remnant to the 1,6-beta-glucan of the outer cell wall layer.

It localises to the cell membrane. Its subcellular location is the secreted. The protein localises to the cell wall. The enzyme catalyses Hydrolysis of (1-&gt;3)-beta-D-glucosidic linkages in (1-&gt;3)-beta-D-glucans.. In terms of biological role, glucanases play a role in cell expansion during growth, in cell-cell fusion during mating, and in spore release during sporulation. This enzyme may be involved in beta-glucan degradation and also function biosynthetically as a transglycosylase. The chain is Probable glucan endo-1,3-beta-glucosidase eglC (eglC) from Aspergillus fumigatus (strain CBS 144.89 / FGSC A1163 / CEA10) (Neosartorya fumigata).